Reading from the N-terminus, the 214-residue chain is Uracil phosphoribosyltransferase (214 aa).

5-phospho-alpha-D-ribose 1-diphosphate is bound by residues arginine 81, arginine 106, and aspartate 133–serine 141. Residues isoleucine 196 and glycine 201–alanine 203 contribute to the uracil site. A 5-phospho-alpha-D-ribose 1-diphosphate-binding site is contributed by aspartate 202.

This sequence belongs to the UPRTase family. It depends on Mg(2+) as a cofactor.

The catalysed reaction is UMP + diphosphate = 5-phospho-alpha-D-ribose 1-diphosphate + uracil. Its pathway is pyrimidine metabolism; UMP biosynthesis via salvage pathway; UMP from uracil: step 1/1. With respect to regulation, allosterically activated by GTP. Functionally, catalyzes the conversion of uracil and 5-phospho-alpha-D-ribose 1-diphosphate (PRPP) to UMP and diphosphate. The sequence is that of Uracil phosphoribosyltransferase from Legionella pneumophila subsp. pneumophila (strain Philadelphia 1 / ATCC 33152 / DSM 7513).